A 204-amino-acid polypeptide reads, in one-letter code: Cytochrome c biogenesis ATP-binding export protein CcmA (204 aa).

The 202-residue stretch at 3-204 (LTVTDLAIAR…PLDDPDGDFL (202 aa)) folds into the ABC transporter domain. 35–42 (GPNGAGKT) contacts ATP.

The protein belongs to the ABC transporter superfamily. CcmA exporter (TC 3.A.1.107) family. In terms of assembly, the complex is composed of two ATP-binding proteins (CcmA) and two transmembrane proteins (CcmB).

Its subcellular location is the cell membrane. It carries out the reaction heme b(in) + ATP + H2O = heme b(out) + ADP + phosphate + H(+). Functionally, part of the ABC transporter complex CcmAB involved in the biogenesis of c-type cytochromes; once thought to export heme, this seems not to be the case, but its exact role is uncertain. Responsible for energy coupling to the transport system. This is Cytochrome c biogenesis ATP-binding export protein CcmA from Ruegeria pomeroyi (strain ATCC 700808 / DSM 15171 / DSS-3) (Silicibacter pomeroyi).